A 385-amino-acid polypeptide reads, in one-letter code: Hsp70/Hsp90 co-chaperone CNS1 (385 aa).

The interval 1–37 (MSSVNANGGYTKPQKYVPGPGDPELPPQLSEFKDKTS) is disordered. TPR repeat units follow at residues 83-116 (AENF…ECED), 121-154 (ESLY…NPKN), and 155-189 (VKCY…DPEN).

The protein belongs to the TTC4 family. As to quaternary structure, monomer. Component of Hsp70 and Hsp90 chaperone complexes. Interacts (via TPR repeats) with HSC82 and HSP82 (via C-terminal MEEVD pentapeptide). Interacts with CPR7, SSA1 and SPI1.

The protein localises to the cytoplasm. Functionally, co-chaperone that binds to the molecular chaperones Hsp90 (HSC82 and HSP82) and Hsp70 (SSA1). Stimulates SSA1 ATPase activity, but not Hsp90 ATPase activity. Involved in only a subset of Hsp90 functions. This chain is Hsp70/Hsp90 co-chaperone CNS1 (CNS1), found in Saccharomyces cerevisiae (strain ATCC 204508 / S288c) (Baker's yeast).